Consider the following 409-residue polypeptide: NADH-ubiquinone oxidoreductase chain 4 (409 aa).

A run of 13 helical transmembrane segments spans residues 9–29 (LYFF…GFVA), 44–64 (SFSF…VLLS), 68–88 (FMLL…FVPS), 90–110 (VILM…MILG), 125–145 (IFYA…SFFF), 160–180 (VFVL…HLWL), 194–214 (LLAG…LGCL), 221–241 (VWIV…MFQS), 246–268 (LAAY…IIMS), 273–295 (GVIL…GEFY), 305–325 (YMSS…VVFL), 352–372 (FSFW…IYLL), and 389–409 (VGFS…SVFF).

This sequence belongs to the complex I subunit 4 family.

The protein localises to the mitochondrion membrane. The catalysed reaction is a ubiquinone + NADH + 5 H(+)(in) = a ubiquinol + NAD(+) + 4 H(+)(out). Core subunit of the mitochondrial membrane respiratory chain NADH dehydrogenase (Complex I) that is believed to belong to the minimal assembly required for catalysis. Complex I functions in the transfer of electrons from NADH to the respiratory chain. The immediate electron acceptor for the enzyme is believed to be ubiquinone. In Ascaris suum (Pig roundworm), this protein is NADH-ubiquinone oxidoreductase chain 4 (ND4).